The sequence spans 350 residues: Methionine import ATP-binding protein MetN 1 (350 aa).

Residues Ile-12–Val-251 enclose the ABC transporter domain. Gly-48–Ser-55 is an ATP binding site.

The protein belongs to the ABC transporter superfamily. Methionine importer (TC 3.A.1.24) family. In terms of assembly, the complex is composed of two ATP-binding proteins (MetN), two transmembrane proteins (MetI) and a solute-binding protein (MetQ).

It is found in the cell membrane. The catalysed reaction is L-methionine(out) + ATP + H2O = L-methionine(in) + ADP + phosphate + H(+). It catalyses the reaction D-methionine(out) + ATP + H2O = D-methionine(in) + ADP + phosphate + H(+). Functionally, part of the ABC transporter complex MetNIQ involved in methionine import. Responsible for energy coupling to the transport system. This Oenococcus oeni (strain ATCC BAA-331 / PSU-1) protein is Methionine import ATP-binding protein MetN 1.